We begin with the raw amino-acid sequence, 713 residues long: Phenylalanine--tRNA ligase beta subunit (713 aa).

Positions 39–153 constitute a tRNA-binding domain; it reads IRHVENIKYG…EANLNEDPIA (115 aa). Positions 379-454 constitute a B5 domain; it reads LKPKEILFDH…RFYGYDNFPI (76 aa). 4 residues coordinate Mg(2+): Asp432, Asp438, Glu441, and Glu442.

The protein belongs to the phenylalanyl-tRNA synthetase beta subunit family. Type 1 subfamily. In terms of assembly, tetramer of two alpha and two beta subunits. Requires Mg(2+) as cofactor.

The protein resides in the cytoplasm. The enzyme catalyses tRNA(Phe) + L-phenylalanine + ATP = L-phenylalanyl-tRNA(Phe) + AMP + diphosphate + H(+). The protein is Phenylalanine--tRNA ligase beta subunit of Mycoplasma mobile (strain ATCC 43663 / 163K / NCTC 11711) (Mesomycoplasma mobile).